Consider the following 116-residue polypeptide: MVRIKRGNVARKRRQKILKAAKGFYACTTFRAANERVMKSWKASYRGRKLRKRDFRRLWITRLNAILPYKYSKFVHQLKQNQIALNRKMLYQLSCLDQKGFEQLYGLSLTRNHLIC.

This sequence belongs to the bacterial ribosomal protein bL20 family.

It is found in the plastid. The protein localises to the chloroplast. Its function is as follows. Binds directly to 23S ribosomal RNA and is necessary for the in vitro assembly process of the 50S ribosomal subunit. It is not involved in the protein synthesizing functions of that subunit. The sequence is that of Large ribosomal subunit protein bL20c from Cyanidioschyzon merolae (strain NIES-3377 / 10D) (Unicellular red alga).